The sequence spans 918 residues: Serine/threonine-protein kinase D1 (918 aa).

Tyr93 carries the phosphotyrosine modification. The Phorbol-ester/DAG-type 1 zinc finger occupies 144 to 194; it reads PHALFVHSYRAPAFCDHCGEMLWGLVRQGLKCEGCGLNYHKRCAFKIPNNC. Residues Ser203, Ser206, Ser217, and Ser221 each carry the phosphoserine modification. Residues 276 to 326 form a Phorbol-ester/DAG-type 2 zinc finger; the sequence is PHTFVIHSYTRPTVCQFCKKLLKGLFRQGLQCKDCRFNCHKRCAPKVPNNC. Disordered stretches follow at residues 338-362 and 380-408; these read SPGA…NSGL and EGQS…STSN. Acidic residues-rich tracts occupy residues 345-355 and 387-396; these read VVMEEGSDDND and EMQDPDADQE. Phosphoserine is present on Ser351. Phosphoserine; by MAPK13 is present on residues Ser403 and Ser407. One can recognise a PH domain in the interval 428–547; it reads TVMKEGWMVH…WEVAIQHALM (120 aa). Tyr438 carries the phosphotyrosine modification. Ser454 carries the post-translational modification Phosphoserine. Tyr469 is modified (phosphotyrosine; by ABL). A Phosphotyrosine modification is found at Tyr508. Ser554 carries the phosphoserine modification. The 257-residue stretch at 589 to 845 folds into the Protein kinase domain; the sequence is IFPDEVLGSG…VDKTLSHPWL (257 aa). ATP contacts are provided by residues 595–603 and Lys618; that span reads LGSGQFGIV. Residue Asp712 is the Proton acceptor of the active site. Ser744 carries the post-translational modification Phosphoserine; by PKC/PRKCD. At Ser748 the chain carries Phosphoserine; by autocatalysis and PKC/PRKCD. The residue at position 755 (Tyr755) is a Phosphotyrosine. Ser916 carries the post-translational modification Phosphoserine; by autocatalysis.

Belongs to the protein kinase superfamily. CAMK Ser/Thr protein kinase family. PKD subfamily. In terms of assembly, interacts (via N-terminus) with ADAP1/CENTA1. Interacts with MAPK13. Interacts with DAPK1 in an oxidative stress-regulated manner. Interacts with USP28; the interaction induces phosphorylation of USP28 and activated KRAS-mediated stabilization of ZNF304. Interacts with AKAP13 (via C-terminal domain). Mg(2+) is required as a cofactor. In terms of processing, phosphorylated at Ser-403 and Ser-407 by MAPK13 during regulation of insulin secretion in pancreatic beta cells. Phosphorylated by DAPK1. Phosphorylated at Tyr-93 and by ABL at Tyr-469, which primes the kinase in response to oxidative stress, and promotes a second step activating phosphorylation at Ser-744/Ser-748 by PKRD. Phosphorylated on Ser-916 upon S.enterica infection in macrophages.

The protein localises to the cytoplasm. Its subcellular location is the cell membrane. It is found in the golgi apparatus. It localises to the trans-Golgi network. The catalysed reaction is L-seryl-[protein] + ATP = O-phospho-L-seryl-[protein] + ADP + H(+). It carries out the reaction L-threonyl-[protein] + ATP = O-phospho-L-threonyl-[protein] + ADP + H(+). Its activity is regulated as follows. Activated by DAG and phorbol esters. Phorbol-ester/DAG-type domain 1 binds DAG with high affinity and appears to play the dominant role in mediating translocation to the cell membrane and trans-Golgi network. Phorbol-ester/DAG-type domain 2 binds phorbol ester with higher affinity. Autophosphorylation of Ser-748 and phosphorylation of Ser-744 by PKC relieves auto-inhibition by the PH domain. Phosphorylation on Tyr-469 by the SRC-ABL1 pathway in response to oxidative stress, is also required for activation. Activated by DAPK1 under oxidative stress. In terms of biological role, serine/threonine-protein kinase that converts transient diacylglycerol (DAG) signals into prolonged physiological effects downstream of PKC, and is involved in the regulation of MAPK8/JNK1 and Ras signaling, Golgi membrane integrity and trafficking, cell survival through NF-kappa-B activation, cell migration, cell differentiation by mediating HDAC7 nuclear export, cell proliferation via MAPK1/3 (ERK1/2) signaling, and plays a role in cardiac hypertrophy, VEGFA-induced angiogenesis, genotoxic-induced apoptosis and flagellin-stimulated inflammatory response. Phosphorylates the epidermal growth factor receptor (EGFR) on dual threonine residues, which leads to the suppression of epidermal growth factor (EGF)-induced MAPK8/JNK1 activation and subsequent JUN phosphorylation. Phosphorylates RIN1, inducing RIN1 binding to 14-3-3 proteins YWHAB, YWHAE and YWHAZ and increased competition with RAF1 for binding to GTP-bound form of Ras proteins (NRAS, HRAS and KRAS). Acts downstream of the heterotrimeric G-protein beta/gamma-subunit complex to maintain the structural integrity of the Golgi membranes, and is required for protein transport along the secretory pathway. In the trans-Golgi network (TGN), regulates the fission of transport vesicles that are on their way to the plasma membrane. May act by activating the lipid kinase phosphatidylinositol 4-kinase beta (PI4KB) at the TGN for the local synthesis of phosphorylated inositol lipids, which induces a sequential production of DAG, phosphatidic acid (PA) and lyso-PA (LPA) that are necessary for membrane fission and generation of specific transport carriers to the cell surface. Under oxidative stress, is phosphorylated at Tyr-469 via SRC-ABL1 and contributes to cell survival by activating IKK complex and subsequent nuclear translocation and activation of NFKB1. Involved in cell migration by regulating integrin alpha-5/beta-3 recycling and promoting its recruitment in newly forming focal adhesion. In osteoblast differentiation, mediates the bone morphogenetic protein 2 (BMP2)-induced nuclear export of HDAC7, which results in the inhibition of HDAC7 transcriptional repression of RUNX2. In neurons, plays an important role in neuronal polarity by regulating the biogenesis of TGN-derived dendritic vesicles, and is involved in the maintenance of dendritic arborization and Golgi structure in hippocampal cells. May potentiate mitogenesis induced by the neuropeptide bombesin or vasopressin by mediating an increase in the duration of MAPK1/3 (ERK1/2) signaling, which leads to accumulation of immediate-early gene products including FOS that stimulate cell cycle progression. Plays an important role in the proliferative response induced by low calcium in keratinocytes, through sustained activation of MAPK1/3 (ERK1/2) pathway. Downstream of novel PKC signaling, plays a role in cardiac hypertrophy by phosphorylating HDAC5, which in turn triggers XPO1/CRM1-dependent nuclear export of HDAC5, MEF2A transcriptional activation and induction of downstream target genes that promote myocyte hypertrophy and pathological cardiac remodeling. Mediates cardiac troponin I (TNNI3) phosphorylation at the PKA sites, which results in reduced myofilament calcium sensitivity, and accelerated crossbridge cycling kinetics. The PRKD1-HDAC5 pathway is also involved in angiogenesis by mediating VEGFA-induced specific subset of gene expression, cell migration, and tube formation. In response to VEGFA, is necessary and required for HDAC7 phosphorylation which induces HDAC7 nuclear export and endothelial cell proliferation and migration. During apoptosis induced by cytarabine and other genotoxic agents, PRKD1 is cleaved by caspase-3 at Asp-378, resulting in activation of its kinase function and increased sensitivity of cells to the cytotoxic effects of genotoxic agents. In epithelial cells, is required for transducing flagellin-stimulated inflammatory responses by binding and phosphorylating TLR5, which contributes to MAPK14/p38 activation and production of inflammatory cytokines. Acts as an activator of NLRP3 inflammasome assembly by mediating phosphorylation of NLRP3. May play a role in inflammatory response by mediating activation of NF-kappa-B. May be involved in pain transmission by directly modulating TRPV1 receptor. Plays a role in activated KRAS-mediated stabilization of ZNF304 in colorectal cancer (CRC) cells. Regulates nuclear translocation of transcription factor TFEB in macrophages upon live S.enterica infection. This Rattus norvegicus (Rat) protein is Serine/threonine-protein kinase D1 (Prkd1).